The primary structure comprises 629 residues: Phosphomethylpyrimidine synthase (629 aa).

The interval Met1–Gly20 is disordered. Substrate is bound by residues Asn233, Met262, Tyr291, His327, Ser347–Gly349, Asp388–Arg391, and Glu427. His431 lines the Zn(2+) pocket. Residue Tyr454 coordinates substrate. Residue His495 participates in Zn(2+) binding. [4Fe-4S] cluster-binding residues include Cys575, Cys578, and Cys583.

This sequence belongs to the ThiC family. Homodimer. It depends on [4Fe-4S] cluster as a cofactor.

The enzyme catalyses 5-amino-1-(5-phospho-beta-D-ribosyl)imidazole + S-adenosyl-L-methionine = 4-amino-2-methyl-5-(phosphooxymethyl)pyrimidine + CO + 5'-deoxyadenosine + formate + L-methionine + 3 H(+). The protein operates within cofactor biosynthesis; thiamine diphosphate biosynthesis. Functionally, catalyzes the synthesis of the hydroxymethylpyrimidine phosphate (HMP-P) moiety of thiamine from aminoimidazole ribotide (AIR) in a radical S-adenosyl-L-methionine (SAM)-dependent reaction. The polypeptide is Phosphomethylpyrimidine synthase (Pseudomonas savastanoi pv. phaseolicola (strain 1448A / Race 6) (Pseudomonas syringae pv. phaseolicola (strain 1448A / Race 6))).